Consider the following 71-residue polypeptide: ATP synthase subunit c (71 aa).

2 helical membrane-spanning segments follow: residues 5–25 and 47–67; these read GAAIVAGLAAVGGAIAVAIIV and FIGVPLAEAVPIIAIVMGFLI.

Belongs to the ATPase C chain family. As to quaternary structure, F-type ATPases have 2 components, F(1) - the catalytic core - and F(0) - the membrane proton channel. F(1) has five subunits: alpha(3), beta(3), gamma(1), delta(1), epsilon(1). F(0) has three main subunits: a(1), b(2) and c(10-14). The alpha and beta chains form an alternating ring which encloses part of the gamma chain. F(1) is attached to F(0) by a central stalk formed by the gamma and epsilon chains, while a peripheral stalk is formed by the delta and b chains.

The protein resides in the cell membrane. Functionally, f(1)F(0) ATP synthase produces ATP from ADP in the presence of a proton or sodium gradient. F-type ATPases consist of two structural domains, F(1) containing the extramembraneous catalytic core and F(0) containing the membrane proton channel, linked together by a central stalk and a peripheral stalk. During catalysis, ATP synthesis in the catalytic domain of F(1) is coupled via a rotary mechanism of the central stalk subunits to proton translocation. Key component of the F(0) channel; it plays a direct role in translocation across the membrane. A homomeric c-ring of between 10-14 subunits forms the central stalk rotor element with the F(1) delta and epsilon subunits. This is ATP synthase subunit c from Alkalihalobacillus alcalophilus (Bacillus alcalophilus).